Consider the following 159-residue polypeptide: Keratin-associated protein 6-2 (159 aa).

The 66 X 2 AA repeats of G-[YCGS] stretch occupies residues 11–147 (GYGCGYGSGY…SYYRSGCCGY (137 aa)).

Belongs to the KRTAP type 6 family. Interacts with hair keratins. In terms of tissue distribution, expressed in skin during two hair growth cycles. Expression restricted to the cortical cells of hair follicles, appearing first in the cortical cells processing the flat nuclei located a few cells above the dermal papilla.

Its function is as follows. In the hair cortex, hair keratin intermediate filaments are embedded in an interfilamentous matrix, consisting of hair keratin-associated proteins (KRTAP), which are essential for the formation of a rigid and resistant hair shaft through their extensive disulfide bond cross-linking with abundant cysteine residues of hair keratins. The matrix proteins include the high-sulfur and high-glycine-tyrosine keratins. The protein is Keratin-associated protein 6-2 of Mus musculus (Mouse).